The chain runs to 275 residues: Tryptophan synthase alpha chain (275 aa).

Catalysis depends on proton acceptor residues glutamate 60 and aspartate 71.

The protein belongs to the TrpA family. In terms of assembly, tetramer of two alpha and two beta chains.

It carries out the reaction (1S,2R)-1-C-(indol-3-yl)glycerol 3-phosphate + L-serine = D-glyceraldehyde 3-phosphate + L-tryptophan + H2O. It functions in the pathway amino-acid biosynthesis; L-tryptophan biosynthesis; L-tryptophan from chorismate: step 5/5. Functionally, the alpha subunit is responsible for the aldol cleavage of indoleglycerol phosphate to indole and glyceraldehyde 3-phosphate. The sequence is that of Tryptophan synthase alpha chain from Prochlorococcus marinus (strain MIT 9313).